A 227-amino-acid polypeptide reads, in one-letter code: Peptidyl-tRNA hydrolase (227 aa).

Position 14 (Y14) interacts with tRNA. The active-site Proton acceptor is H19. The tRNA site is built by F64, N66, and N112. The segment at 182-227 (RIALLTQPPKPPKPPKPPKDGAKETAGKGTEAETAKPPGPAAGRTG) is disordered. A compositionally biased stretch (basic and acidic residues) spans 198 to 215 (PPKDGAKETAGKGTEAET).

The protein belongs to the PTH family. As to quaternary structure, monomer.

It is found in the cytoplasm. It catalyses the reaction an N-acyl-L-alpha-aminoacyl-tRNA + H2O = an N-acyl-L-amino acid + a tRNA + H(+). Hydrolyzes ribosome-free peptidyl-tRNAs (with 1 or more amino acids incorporated), which drop off the ribosome during protein synthesis, or as a result of ribosome stalling. Functionally, catalyzes the release of premature peptidyl moieties from peptidyl-tRNA molecules trapped in stalled 50S ribosomal subunits, and thus maintains levels of free tRNAs and 50S ribosomes. In Rhodospirillum centenum (strain ATCC 51521 / SW), this protein is Peptidyl-tRNA hydrolase.